The chain runs to 64 residues: Large ribosomal subunit protein bL35 (64 aa).

2 stretches are compositionally biased toward basic residues: residues 1 to 15 (MPKA…KRFR) and 23 to 42 (VRQK…KRTR). Positions 1–45 (MPKAKTHSGASKRFRTTGSGKVVRQKANRRHLLEHKPTKRTRRLD) are disordered.

It belongs to the bacterial ribosomal protein bL35 family.

The protein is Large ribosomal subunit protein bL35 of Mycolicibacterium vanbaalenii (strain DSM 7251 / JCM 13017 / BCRC 16820 / KCTC 9966 / NRRL B-24157 / PYR-1) (Mycobacterium vanbaalenii).